The primary structure comprises 418 residues: Tyrosine--tRNA ligase (418 aa).

Residue tyrosine 34 participates in L-tyrosine binding. Positions 39 to 48 (PTADSLHLGH) match the 'HIGH' region motif. Residues tyrosine 169 and glutamine 173 each coordinate L-tyrosine. A 'KMSKS' region motif is present at residues 229–233 (KFGKS). ATP is bound at residue lysine 232. Positions 352-418 (LNLVDMLVTA…GKKKYAVLTY (67 aa)) constitute an S4 RNA-binding domain.

The protein belongs to the class-I aminoacyl-tRNA synthetase family. TyrS type 1 subfamily. As to quaternary structure, homodimer.

The protein resides in the cytoplasm. It catalyses the reaction tRNA(Tyr) + L-tyrosine + ATP = L-tyrosyl-tRNA(Tyr) + AMP + diphosphate + H(+). Its function is as follows. Catalyzes the attachment of tyrosine to tRNA(Tyr) in a two-step reaction: tyrosine is first activated by ATP to form Tyr-AMP and then transferred to the acceptor end of tRNA(Tyr). The protein is Tyrosine--tRNA ligase of Streptococcus pyogenes serotype M5 (strain Manfredo).